We begin with the raw amino-acid sequence, 741 residues long: Cysteine--tRNA ligase, cytoplasmic (741 aa).

A Zn(2+)-binding site is contributed by cysteine 46. Residues 48–58 carry the 'HIGH' region motif; that stretch reads PTVYDASHMGH. Serine 297 is modified (phosphoserine). Positions 340, 365, and 369 each coordinate Zn(2+). Positions 398 to 402 match the 'KMSKS' region motif; sequence KMSKS. Lysine 401 contributes to the ATP binding site. Residues 697–718 form a disordered region; the sequence is FDENGLPTHDKEGKEVSKGQIK. Positions 704 to 713 are enriched in basic and acidic residues; it reads THDKEGKEVS.

Belongs to the class-I aminoacyl-tRNA synthetase family. Requires Zn(2+) as cofactor.

Its subcellular location is the cytoplasm. The catalysed reaction is tRNA(Cys) + L-cysteine + ATP = L-cysteinyl-tRNA(Cys) + AMP + diphosphate. In Drosophila melanogaster (Fruit fly), this protein is Cysteine--tRNA ligase, cytoplasmic.